The following is a 269-amino-acid chain: Mitochondrial S-adenosylmethionine carrier protein (269 aa).

3 Solcar repeats span residues 4–77 (REFC…AKQL), 85–167 (LSPI…LKDL), and 176–264 (VDSW…VRTL). The next 6 helical transmembrane spans lie at 5 to 25 (EFCASLLAGGTAGMCVDLILF), 49 to 69 (IYAGVPSTAVGSFPNAAAFFV), 84 to 104 (YLSPIIHMAAASLGEVVACLI), 141 to 161 (RGYKSTVLREIPFSLVQFPLW), 181 to 201 (SAVCGAFAGGFAAALTTPLDV), and 237 to 257 (FAGVIPRMTAISLGGFIFLGA).

This sequence belongs to the mitochondrial carrier (TC 2.A.29) family.

The protein resides in the mitochondrion inner membrane. It catalyses the reaction S-adenosyl-L-homocysteine(out) + S-adenosyl-L-methionine(in) = S-adenosyl-L-homocysteine(in) + S-adenosyl-L-methionine(out). Mitochondrial S-adenosyl-L-methionine/S-adenosyl-L-homocysteine antiporter. Mediates the exchange of cytosolic S-adenosyl-L-methionine, the predominant methyl-group donor for macromolecule methylation processes, for mitochondrial S-adenosylhomocysteine(SAH), a by-product of methylation reactions. The sequence is that of Mitochondrial S-adenosylmethionine carrier protein (slc25a26) from Xenopus tropicalis (Western clawed frog).